Here is a 209-residue protein sequence, read N- to C-terminus: MNLFQNAKFFTTVNHLKDLPDTPLEIAFVGRSNAGKSSAINTLTNHVRLAYVSKTPGRTQHINFFELQNGNFMVDLPGYGYAQVPEAVRAHWVNLLGDYLRHRKQLIGLVLIMDARHPLKELDIRMLDFFHTTGRPVHILLSKADKLSKNEQIKTLSQVKKLLKPYSDRQNISVQLFSSLKKQGIDEANRTVGSWFDAADAAASSPEEN.

An EngB-type G domain is found at 22-198 (TPLEIAFVGR…NRTVGSWFDA (177 aa)). Positions 37 and 59 each coordinate Mg(2+).

Belongs to the TRAFAC class TrmE-Era-EngA-EngB-Septin-like GTPase superfamily. EngB GTPase family. It depends on Mg(2+) as a cofactor.

Its function is as follows. Necessary for normal cell division and for the maintenance of normal septation. This Neisseria gonorrhoeae (strain ATCC 700825 / FA 1090) protein is Probable GTP-binding protein EngB.